The sequence spans 77 residues: Cell division topological specificity factor (77 aa).

This sequence belongs to the MinE family.

Its function is as follows. Prevents the cell division inhibition by proteins MinC and MinD at internal division sites while permitting inhibition at polar sites. This ensures cell division at the proper site by restricting the formation of a division septum at the midpoint of the long axis of the cell. In Nautilia profundicola (strain ATCC BAA-1463 / DSM 18972 / AmH), this protein is Cell division topological specificity factor.